A 276-amino-acid polypeptide reads, in one-letter code: Glucosamine-6-phosphate deaminase 2 (276 aa).

Aspartate 72 acts as the Proton acceptor; for enolization step in catalysis. Residues 103–131 (NAHILDGNAADLQAECDAFEEKIKEAGGI) adopt a coiled-coil conformation. The active-site For ring-opening step is aspartate 141. The active-site Proton acceptor; for ring-opening step is histidine 143. Glutamate 148 functions as the For ring-opening step in the catalytic mechanism. Residue threonine 161 is modified to Phosphothreonine.

It belongs to the glucosamine/galactosamine-6-phosphate isomerase family. In terms of assembly, homohexamer.

The protein localises to the cytoplasm. It carries out the reaction alpha-D-glucosamine 6-phosphate + H2O = beta-D-fructose 6-phosphate + NH4(+). It participates in nucleotide-sugar biosynthesis; UDP-N-acetyl-alpha-D-glucosamine biosynthesis; alpha-D-glucosamine 6-phosphate from D-fructose 6-phosphate: step 1/1. Allosterically activated by N-acetylglucosamine-6-phosphate (GlcNAc6P). Catalyzes the reversible conversion of alpha-D-glucosamine 6-phosphate (GlcN-6P) into beta-D-fructose 6-phosphate (Fru-6P) and ammonium ion, a regulatory reaction step in de novo uridine diphosphate-N-acetyl-alpha-D-glucosamine (UDP-GlcNAc) biosynthesis via hexosamine pathway. Deamination is coupled to aldo-keto isomerization mediating the metabolic flux from UDP-GlcNAc toward Fru-6P. At high ammonium level can drive amination and isomerization of Fru-6P toward hexosamines and UDP-GlcNAc synthesis. Has a role in fine tuning the metabolic fluctuations of cytosolic UDP-GlcNAc and their effects on hyaluronan synthesis that occur during tissue remodeling. The polypeptide is Glucosamine-6-phosphate deaminase 2 (Mus musculus (Mouse)).